The sequence spans 97 residues: Mapk-regulated corepressor-interacting protein 1 (97 aa).

The interval 1-30 (MTSSPVSRVVYNGKRNSSHRSPPNSSEIFT) is disordered. Position 21 is a phosphoserine (serine 21). A Phosphothreonine modification is found at threonine 30. Tyrosine 41 is modified (phosphotyrosine). Residues 77-97 (TFRPIDLSDLKRRNTQDAKKS) are disordered. The PXDLS motif motif lies at 80–84 (PIDLS). Residues 82-97 (DLSDLKRRNTQDAKKS) are compositionally biased toward basic and acidic residues.

Belongs to the MCRIP family. Interacts (unphosphorylated form, via the PXDLS motif) with CTBP1, competitively inhibiting CTBP-ZEB1 interaction. Interacts with CTBP2. Interacts with MCRIP2. Interacts with DDX6. In terms of processing, phosphorylation by MAPK3/1 (ERK1/2) regulates MCRIP1 binding to CTBP(s).

The protein resides in the nucleus. It is found in the cytoplasm. Its subcellular location is the stress granule. In terms of biological role, the phosphorylation status of MCRIP1 functions as a molecular switch to regulate epithelial-mesenchymal transition. Unphosphorylated MCRIP1 binds to and inhibits the transcriptional corepressor CTBP(s). When phosphorylated by MAPK/ERK, MCRIP1 releases CTBP(s) resulting in transcriptional silencing of the E-cadherin gene and induction of epithelial-mesenchymal transition. The polypeptide is Mapk-regulated corepressor-interacting protein 1 (MCRIP1) (Bos taurus (Bovine)).